A 317-amino-acid polypeptide reads, in one-letter code: Methionyl-tRNA formyltransferase (317 aa).

(6S)-5,6,7,8-tetrahydrofolate is bound at residue Ser111–Pro114.

Belongs to the Fmt family.

It catalyses the reaction L-methionyl-tRNA(fMet) + (6R)-10-formyltetrahydrofolate = N-formyl-L-methionyl-tRNA(fMet) + (6S)-5,6,7,8-tetrahydrofolate + H(+). Attaches a formyl group to the free amino group of methionyl-tRNA(fMet). The formyl group appears to play a dual role in the initiator identity of N-formylmethionyl-tRNA by promoting its recognition by IF2 and preventing the misappropriation of this tRNA by the elongation apparatus. The sequence is that of Methionyl-tRNA formyltransferase from Chlorobium phaeobacteroides (strain BS1).